A 299-amino-acid polypeptide reads, in one-letter code: Probable lipid kinase YegS (299 aa).

Positions alanine 2–threonine 133 constitute a DAGKc domain. ATP is bound by residues threonine 40, glycine 66–glutamate 72, and threonine 95. Residues leucine 215, aspartate 218, and leucine 220 each coordinate Mg(2+). Catalysis depends on glutamate 271, which acts as the Proton acceptor.

Belongs to the diacylglycerol/lipid kinase family. YegS lipid kinase subfamily. Requires Mg(2+) as cofactor. Ca(2+) is required as a cofactor.

It localises to the cytoplasm. Functionally, probably phosphorylates lipids; the in vivo substrate is unknown. The chain is Probable lipid kinase YegS from Escherichia coli (strain K12 / MC4100 / BW2952).